A 71-amino-acid chain; its full sequence is uncharacterized protein (71 aa).

The helical transmembrane segment at 44–66 (LFFLVFRRLFSWFLVLLPSPRFF) threads the bilayer.

The protein localises to the membrane. This is an uncharacterized protein from Saccharomyces cerevisiae (strain ATCC 204508 / S288c) (Baker's yeast).